We begin with the raw amino-acid sequence, 59 residues long: Cortexin domain-containing 1 protein (59 aa).

Residues 17-37 (LTLACFVFLCLFLVVMIIRCA) form a helical membrane-spanning segment.

The protein resides in the membrane. The sequence is that of Cortexin domain-containing 1 protein from Homo sapiens (Human).